Reading from the N-terminus, the 430-residue chain is MIDLKQLRENPQAFGDRLRRRGGDFDLDRILELDAQQRQLEQQRSQLQARSNEIGALVGKKIKSGIAPTDPEIQALKAEANALKQKLSDLEPQERQLKEELESLLLTIPNPPSETTPIGRDETDNVEVRRWGEEYKPTYPCQPHWDIGTRLGLWDVERSVKVAQSRFVTLLGLGAALERALIQFMLDSHRERGYVEVLPPLLVNTASLTGTGQLPKFAEESFRCADDDLWLIPTAEVPVTNLYRDEILAADQLPIYHCAYTPCFRREAGSYGKDTRGLIRLHQFNKVELVKFVHPETSAAEHEALVADAEFILQALKLPYRVIELCTGDLGFAAMKCYDLEVWLPAAGCYREISSCSNFGDFQARRAKIRFKGAKHKGTQFVHTLNGSGLAVGRTMAAILENYQQPDGTVRVPEVLQPYLKCSHIGGAKS.

234 to 236 (TAE) lines the L-serine pocket. 265–267 (RRE) provides a ligand contact to ATP. An L-serine-binding site is contributed by Glu288. 352–355 (EISS) lines the ATP pocket. Ser388 provides a ligand contact to L-serine.

The protein belongs to the class-II aminoacyl-tRNA synthetase family. Type-1 seryl-tRNA synthetase subfamily. In terms of assembly, homodimer. The tRNA molecule binds across the dimer.

It localises to the cytoplasm. It catalyses the reaction tRNA(Ser) + L-serine + ATP = L-seryl-tRNA(Ser) + AMP + diphosphate + H(+). The enzyme catalyses tRNA(Sec) + L-serine + ATP = L-seryl-tRNA(Sec) + AMP + diphosphate + H(+). The protein operates within aminoacyl-tRNA biosynthesis; selenocysteinyl-tRNA(Sec) biosynthesis; L-seryl-tRNA(Sec) from L-serine and tRNA(Sec): step 1/1. Its function is as follows. Catalyzes the attachment of serine to tRNA(Ser). Is also able to aminoacylate tRNA(Sec) with serine, to form the misacylated tRNA L-seryl-tRNA(Sec), which will be further converted into selenocysteinyl-tRNA(Sec). This Thermosynechococcus vestitus (strain NIES-2133 / IAM M-273 / BP-1) protein is Serine--tRNA ligase.